Consider the following 239-residue polypeptide: MATDELASKLSRRLQMEDEGGEATEQPGLNGAAAAAAEAPDETAQALGSADDELSAKLLRRADLNQGIGEPQSPSRRVFNPYTEFKEFSRKQIKDMEKMFKQYDAGKDGFIDLMELKLMMEKLGAPQTHLGLKSMIQEVDEDFDSKLSFREFLLIFRKAAAGELQEDSGLHVLARLSEIDVSTEGVKGAKNFFEAKVQAINVSSRFEEEIKAEQEERKKQAEEVKQRKAAFKELQSTFK.

The segment at 1–51 (MATDELASKLSRRLQMEDEGGEATEQPGLNGAAAAAAEAPDETAQALGSAD) is disordered. The residue at position 2 (A2) is an N-acetylalanine. Position 11 is a phosphoserine (S11). The span at 32–46 (AAAAAAEAPDETAQA) shows a compositional bias: low complexity. Phosphoserine is present on residues S73 and S75. A Phosphotyrosine modification is found at Y82. 2 EF-hand domains span residues 91 to 126 (KQIK…LGAP) and 127 to 162 (QTHL…AAAG). D104, D108, E115, D140, D142, D144, K146, and E151 together coordinate Ca(2+). K232 bears the N6-acetyllysine mark.

As to quaternary structure, interacts with CASP9; with inactive form.

It is found in the membrane raft. May regulate B-cell receptor (BCR)-induced immature and primary B-cell apoptosis. Plays a role as negative regulator of the canonical NF-kappa-B-activating branch. Controls spontaneous apoptosis through the regulation of BCL2L1 abundance. This Rattus norvegicus (Rat) protein is EF-hand domain-containing protein D2 (Efhd2).